The chain runs to 434 residues: Enolase (434 aa).

Position 163 (glutamine 163) interacts with (2R)-2-phosphoglycerate. Residue glutamate 205 is the Proton donor of the active site. Aspartate 242, glutamate 289, and aspartate 316 together coordinate Mg(2+). The (2R)-2-phosphoglycerate site is built by lysine 341, arginine 370, serine 371, and lysine 392. Residue lysine 341 is the Proton acceptor of the active site.

This sequence belongs to the enolase family. It depends on Mg(2+) as a cofactor.

The protein localises to the cytoplasm. Its subcellular location is the secreted. The protein resides in the cell surface. It carries out the reaction (2R)-2-phosphoglycerate = phosphoenolpyruvate + H2O. It participates in carbohydrate degradation; glycolysis; pyruvate from D-glyceraldehyde 3-phosphate: step 4/5. Its function is as follows. Catalyzes the reversible conversion of 2-phosphoglycerate (2-PG) into phosphoenolpyruvate (PEP). It is essential for the degradation of carbohydrates via glycolysis. This chain is Enolase, found in Lacticaseibacillus paracasei (strain ATCC 334 / BCRC 17002 / CCUG 31169 / CIP 107868 / KCTC 3260 / NRRL B-441) (Lactobacillus paracasei).